A 56-amino-acid polypeptide reads, in one-letter code: Alpha-conotoxin Pn1.2 (56 aa).

A signal peptide spans 1-16 (MFTVFLLVVLATTVVS). Residues 17-39 (FTSDRASDGGNAAMSDLIALTIK) constitute a propeptide that is removed on maturation. Intrachain disulfides connect Cys41-Cys47 and Cys42-Cys55. Positions 43–45 (SHP) are ser-Xaa-Pro motif, crucial for potent interaction with nAChR. A Cysteine amide modification is found at Cys55.

Belongs to the conotoxin A superfamily. Post-translationally, non-native isomers 'ribbon' (with disulfide connectivity C1-C4; C2-C3) and 'beads' (with disulfide connectivity C1-C2; C3-C4) also inhibit high voltage-activated (HVA) calcium channel currents in rat DRG neurons (20-30% inhibition at 1 uM toxin). As to expression, expressed by the venom duct.

It localises to the secreted. In terms of biological role, alpha-conotoxins act on postsynaptic membranes, they bind to the nicotinic acetylcholine receptors (nAChR) and thus inhibit them. This toxin inhibits human alpha-7/CHRNA7 and alpha-9-alpha-10/CHRNA9/CHRNA10 AChR (complete inhibition at 3 uM of toxin). In addition, this toxin inhibits high voltage-activated (HVA) calcium channel currents in rat DRG neurons (22% inhibition at 1 uM toxin) probably by activating GABA(B) receptors (GABBR1 and/or GABBR2). This is Alpha-conotoxin Pn1.2 from Conus pennaceus (Feathered cone).